The chain runs to 547 residues: MAAKDVKFGNDARVKMLAGVNVLADAVKVTLGPKGRNVVLDKSFGAPTITKDGVSVAREIELEDKFENMGAQMVKEVASKANDAAGDGTTTATVLAQAIVNEGLKAVAAGMNPMDLKRGIDKAVAAVVTELKALSKPCETSKEIEQVGTISANSDSIVGQLIAQAMEKVGKEGVITVEDGTGLEDELDVVEGMQFDRGYLSPYFINKPETATVELDSPFILLVDKKISNIRELLPVLEAVAKAGKPLLIIAEDVEGEALATLVVNTMRGIVKVAAVKAPGFGDRRKAMLQDIAILTAGTVISEEIGMELEKATLEDLGQAKRVVINKDNTTIIDGIGDEAQIKGRVAQIRQQIEESTSDYDKEKLQERVAKLAGGVAVIKVGAATEVEMKEKKDRVEDALHATRAAVEEGIVAGGGVALIRAASKAAASLQGDNEEQNVGIKLALRAMESPLRQIVANAGEEASVVASAVKNGEGNFGYNAGTEQYGDMIAMGILDPTKVTRSALQFAASIAGLMITTEAMVTELPKDDKLDAAAAMGGMGGMGGMM.

ATP contacts are provided by residues 30-33, lysine 51, 87-91, glycine 415, and aspartate 496; these read TLGP and DGTTT.

The protein belongs to the chaperonin (HSP60) family. In terms of assembly, forms a cylinder of 14 subunits composed of two heptameric rings stacked back-to-back. Interacts with the co-chaperonin GroES.

Its subcellular location is the cytoplasm. It carries out the reaction ATP + H2O + a folded polypeptide = ADP + phosphate + an unfolded polypeptide.. Functionally, together with its co-chaperonin GroES, plays an essential role in assisting protein folding. The GroEL-GroES system forms a nano-cage that allows encapsulation of the non-native substrate proteins and provides a physical environment optimized to promote and accelerate protein folding. In Mannheimia succiniciproducens (strain KCTC 0769BP / MBEL55E), this protein is Chaperonin GroEL.